A 154-amino-acid polypeptide reads, in one-letter code: Ribonuclease 8 (154 aa).

Positions 1-27 are cleaved as a signal peptide; it reads MAPARAGCCPLLLLLLGLWVAQIPVSA. Histidine 42 serves as the catalytic Proton acceptor. 2 cysteine pairs are disulfide-bonded: cysteine 64/cysteine 118 and cysteine 89/cysteine 96. Substrate contacts are provided by residues 65-69 and lysine 90; that span reads KDLNT. The Proton donor role is filled by histidine 149.

This sequence belongs to the pancreatic ribonuclease family.

It localises to the secreted. Its function is as follows. Has a low ribonuclease activity. The protein is Ribonuclease 8 (RNASE8) of Chlorocebus aethiops (Green monkey).